We begin with the raw amino-acid sequence, 29 residues long: Cyclotide mobo-A (29 aa).

The segment at residues 1-29 (GFPTCGETCTLGTCNTPGCTCSWPICTRN) is a cross-link (cyclopeptide (Gly-Asn)). Cystine bridges form between cysteine 5-cysteine 19, cysteine 9-cysteine 21, and cysteine 14-cysteine 26.

This sequence belongs to the cyclotide family. Moebius subfamily. This is a cyclic peptide.

In terms of biological role, probably participates in a plant defense mechanism. The sequence is that of Cyclotide mobo-A from Melicytus obovatus (Hymenanthera obovata).